The primary structure comprises 367 residues: DNA replication and repair protein RecF (367 aa).

ATP is bound at residue 30-37 (GENAQGKT).

Belongs to the RecF family.

Its subcellular location is the cytoplasm. Its function is as follows. The RecF protein is involved in DNA metabolism; it is required for DNA replication and normal SOS inducibility. RecF binds preferentially to single-stranded, linear DNA. It also seems to bind ATP. This Chlamydia caviae (strain ATCC VR-813 / DSM 19441 / 03DC25 / GPIC) (Chlamydophila caviae) protein is DNA replication and repair protein RecF.